A 284-amino-acid chain; its full sequence is Bifunctional protein FolD (284 aa).

166 to 168 contacts NADP(+); the sequence is GAS.

Belongs to the tetrahydrofolate dehydrogenase/cyclohydrolase family. In terms of assembly, homodimer.

The enzyme catalyses (6R)-5,10-methylene-5,6,7,8-tetrahydrofolate + NADP(+) = (6R)-5,10-methenyltetrahydrofolate + NADPH. It carries out the reaction (6R)-5,10-methenyltetrahydrofolate + H2O = (6R)-10-formyltetrahydrofolate + H(+). It functions in the pathway one-carbon metabolism; tetrahydrofolate interconversion. In terms of biological role, catalyzes the oxidation of 5,10-methylenetetrahydrofolate to 5,10-methenyltetrahydrofolate and then the hydrolysis of 5,10-methenyltetrahydrofolate to 10-formyltetrahydrofolate. This chain is Bifunctional protein FolD, found in Legionella pneumophila (strain Corby).